The following is a 76-amino-acid chain: U7-lycotoxin-Ls1c (76 aa).

A signal peptide spans 1-22; the sequence is MKLIIFTGLALFLLVSLIDVEA. Residues 23–26 constitute a propeptide that is removed on maturation; it reads QNEG.

This sequence belongs to the neurotoxin 19 (CSTX) family. 07 (U7-Lctx) subfamily. Contains 4 disulfide bonds. In terms of tissue distribution, expressed by the venom gland.

The protein resides in the secreted. The polypeptide is U7-lycotoxin-Ls1c (Lycosa singoriensis (Wolf spider)).